Consider the following 154-residue polypeptide: Large ribosomal subunit protein uL30 (154 aa).

It belongs to the universal ribosomal protein uL30 family. In terms of assembly, part of the 50S ribosomal subunit.

The sequence is that of Large ribosomal subunit protein uL30 from Methanococcus maripaludis (strain DSM 14266 / JCM 13030 / NBRC 101832 / S2 / LL).